The primary structure comprises 51 residues: Large ribosomal subunit protein eL39 (51 aa).

It belongs to the eukaryotic ribosomal protein eL39 family.

The sequence is that of Large ribosomal subunit protein eL39 from Methanosarcina acetivorans (strain ATCC 35395 / DSM 2834 / JCM 12185 / C2A).